We begin with the raw amino-acid sequence, 87 residues long: Small ribosomal subunit protein uS17 (87 aa).

This sequence belongs to the universal ribosomal protein uS17 family. Part of the 30S ribosomal subunit.

Functionally, one of the primary rRNA binding proteins, it binds specifically to the 5'-end of 16S ribosomal RNA. In Bacillus mycoides (strain KBAB4) (Bacillus weihenstephanensis), this protein is Small ribosomal subunit protein uS17.